The primary structure comprises 241 residues: Aspartate/glutamate leucyltransferase (241 aa).

The protein belongs to the R-transferase family. Bpt subfamily.

The protein resides in the cytoplasm. The enzyme catalyses N-terminal L-glutamyl-[protein] + L-leucyl-tRNA(Leu) = N-terminal L-leucyl-L-glutamyl-[protein] + tRNA(Leu) + H(+). It carries out the reaction N-terminal L-aspartyl-[protein] + L-leucyl-tRNA(Leu) = N-terminal L-leucyl-L-aspartyl-[protein] + tRNA(Leu) + H(+). Functionally, functions in the N-end rule pathway of protein degradation where it conjugates Leu from its aminoacyl-tRNA to the N-termini of proteins containing an N-terminal aspartate or glutamate. The protein is Aspartate/glutamate leucyltransferase of Parvibaculum lavamentivorans (strain DS-1 / DSM 13023 / NCIMB 13966).